A 354-amino-acid chain; its full sequence is Guanine nucleotide-binding protein G(i) subunit alpha-3 (354 aa).

Residue Gly-2 is the site of N-myristoyl glycine attachment. The S-palmitoyl cysteine moiety is linked to residue Cys-3. One can recognise a G-alpha domain in the interval 32–354; it reads KEVKLLLLGA…KNNLKECGLY (323 aa). The interval 35–48 is G1 motif; the sequence is KLLLLGAGESGKST. Positions 42, 43, 44, 45, 46, 47, 48, 150, 151, 175, 176, 177, 178, 179, 180, 181, 201, 203, 269, 270, 272, 273, 325, 326, and 327 each coordinate GTP. Ser-47 is a Mg(2+) binding site. Residues 173-181 form a G2 motif region; the sequence is DVLRTRVKT. Thr-181 is a binding site for Mg(2+). The segment at 196-205 is G3 motif; that stretch reads FKMFDVGGQR. Residues 265-272 are G4 motif; sequence ILFLNKKD. The tract at residues 324 to 329 is G5 motif; sequence TCATDT.

It belongs to the G-alpha family. G(i/o/t/z) subfamily. In terms of assembly, heterotrimeric G proteins are composed of 3 units; alpha, beta and gamma. The alpha subunit contains the guanine nucleotide binding site. GTP binding causes dissociation of the heterotrimer, liberating the individual subunits so that they can interact with downstream effector proteins. Forms a complex with CCDC88A/GIV and EGFR which leads to enhanced EGFR signaling and triggering of cell migration; ligand stimulation is required for recruitment of GNAI3 to the complex. Interacts (inactive GDP-bound form) with CCDC88A/GIV (via GBA motif); the interaction leads to activation of GNAI3. Interacts (inactive GDP-bound form) with CCDC88C/DAPLE (via GBA motif); the interaction leads to activation of GNAI3. Interacts (inactive GDP-bound form) with NUCB1 (via GBA motif) and NUCB2 (via GBA motif); the interaction leads to activation of GNAI3. Interacts (inactive GDP-bound form) with PLCD4 (via GBA motif); the interaction leads to activation of GNAI3. Interacts with INSR; the interaction is probably mediated by CCDC88A/GIV. Interacts with GPSM1. Interacts (GDP-bound form) with GPSM2 (via GoLoco domains). Does not interact with RGS2. Interacts with RGS8 and RGS10; this strongly enhances the intrinsic GTPase activity. Interacts with RGS16; this strongly enhances the intrinsic GTPase activity. Interacts with RGS12. Interacts (via active GTP- or inactive GDP-bound form) with RGS14. Interacts (via active GTP-bound form) with TRPC5 (via ANK repeats) in a homotetrameric ion channel; the interaction is direct and activates the channel activity.

It is found in the cytoplasm. The protein localises to the cell membrane. Its subcellular location is the cytoskeleton. The protein resides in the microtubule organizing center. It localises to the centrosome. Functionally, heterotrimeric guanine nucleotide-binding proteins (G proteins) function as transducers downstream of G protein-coupled receptors (GPCRs) in numerous signaling cascades. The alpha chain contains the guanine nucleotide binding site and alternates between an active, GTP-bound state and an inactive, GDP-bound state. Signaling by an activated GPCR promotes GDP release and GTP binding. The alpha subunit has a low GTPase activity that converts bound GTP to GDP, thereby terminating the signal. Both GDP release and GTP hydrolysis are modulated by numerous regulatory proteins. Signaling is mediated via effector proteins, such as adenylate cyclase. Inhibits adenylate cyclase activity, leading to decreased intracellular cAMP levels. Stimulates the activity of receptor-regulated K(+) channels. The active GTP-bound form prevents the association of RGS14 with centrosomes and is required for the translocation of RGS14 from the cytoplasm to the plasma membrane. May play a role in cell division. The active GTP-bound form activates the calcium permeant TRPC5 ion channels. The sequence is that of Guanine nucleotide-binding protein G(i) subunit alpha-3 (GNAI3) from Cricetulus griseus (Chinese hamster).